The primary structure comprises 558 residues: Formate--tetrahydrofolate ligase 2 (558 aa).

Position 67 to 74 (67 to 74 (TPAGEGKT)) interacts with ATP.

It belongs to the formate--tetrahydrofolate ligase family.

It carries out the reaction (6S)-5,6,7,8-tetrahydrofolate + formate + ATP = (6R)-10-formyltetrahydrofolate + ADP + phosphate. It functions in the pathway one-carbon metabolism; tetrahydrofolate interconversion. The sequence is that of Formate--tetrahydrofolate ligase 2 from Desulfitobacterium hafniense (strain Y51).